Consider the following 398-residue polypeptide: Mu-type opioid receptor (398 aa).

The Extracellular segment spans residues 1–66 (MDSSAGPGNI…CPQTGSPSMV (66 aa)). N9, N31, N38, and N46 each carry an N-linked (GlcNAc...) asparagine glycan. The helical transmembrane segment at 67 to 91 (TAITIMALYSIVCVVGLFGNFLVMY) threads the bilayer. At 92–104 (VIVRYTKMKTATN) the chain is on the cytoplasmic side. A helical transmembrane segment spans residues 105 to 129 (IYIFNLALADALATSTLPFQSVNYL). Topologically, residues 130–140 (MGTWPFGNILC) are extracellular. C140 and C217 form a disulfide bridge. The chain crosses the membrane as a helical span at residues 141-163 (KIVISIDYYNMFTSIFTLCTMSV). Residues 164-183 (DRYIAVCHPVKALDFRTPRN) lie on the Cytoplasmic side of the membrane. A Phosphotyrosine modification is found at Y166. The helical transmembrane segment at 184–205 (AKIVNVCNWILSSAIGLPVMFM) threads the bilayer. Residues 206–228 (ATTKYRQGSIDCTLTFSHPTWYW) lie on the Extracellular side of the membrane. Residues 229-253 (ENLLKICVFIFAFIMPVLIITVCYG) form a helical membrane-spanning segment. The Cytoplasmic segment spans residues 254–277 (LMILRLKSVRMLSGSKEKDRNLRR). The helical transmembrane segment at 278–304 (ITRMVLVVVAVFIVCWTPIHIYVIIKA) threads the bilayer. The Extracellular segment spans residues 305–312 (LITIPETT). Residues 313 to 336 (FQTVSWHFCIALGYTNSCLNPVLY) form a helical membrane-spanning segment. Residues 332 to 336 (NPVLY) carry the NPxxY; plays a role in stabilizing the activated conformation of the receptor motif. Residues 337–398 (AFLDENFKRC…NLEAETAPLP (62 aa)) are Cytoplasmic-facing. Residue C351 is the site of S-palmitoyl cysteine attachment. A disordered region spans residues 362 to 383 (NSARIRQNTREHPSTANTVDRT). S363 is subject to Phosphoserine. Residue T370 is modified to Phosphothreonine. S375 bears the Phosphoserine mark. T394 bears the Phosphothreonine mark.

The protein belongs to the G-protein coupled receptor 1 family. In terms of assembly, forms homooligomers and heterooligomers with other GPCRs, such as OPRD1, OPRK1, OPRL1, NPFFR2, ADRA2A, SSTR2, CNR1 and CCR5 (probably in dimeric forms). Interacts with heterotrimeric G proteins; interaction with a heterotrimeric complex containing GNAI1, GNB1 and GNG2 stabilizes the active conformation of the receptor and increases its affinity for endomorphin-2, the synthetic opioid peptide DAMGO and for morphinan agonists. Interacts with PPL; the interaction disrupts agonist-mediated G-protein activation. Interacts (via C-terminus) with DNAJB4 (via C-terminus). Interacts with calmodulin; the interaction inhibits the constitutive activity of OPRM1; it abolishes basal and attenuates agonist-stimulated G-protein coupling. Interacts with FLNA, PLD2, RANBP9 and WLS and GPM6A. Interacts with RTP4. Interacts with SYP and GNAS. Interacts with RGS9, RGS17, RGS20, RGS4, PPP1R9B and HINT1. Isoform 9 interacts with GRPR. Post-translationally, phosphorylated. Differentially phosphorylated in basal and agonist-induced conditions. Agonist-mediated phosphorylation modulates receptor internalization. Phosphorylated by GRK2 in a agonist-dependent manner. Phosphorylation at Tyr-166 requires receptor activation, is dependent on non-receptor protein tyrosine kinase Src and results in a decrease in agonist efficacy by reducing G-protein coupling efficiency. Phosphorylated on tyrosine residues; the phosphorylation is involved in agonist-induced G-protein-independent receptor down-regulation. Phosphorylation at Ser-375 is involved in G-protein-dependent but not beta-arrestin-dependent activation of the ERK pathway. In terms of processing, ubiquitinated. A basal ubiquitination seems not to be related to degradation. Ubiquitination is increased upon formation of OPRM1:OPRD1 oligomers leading to proteasomal degradation; the ubiquitination is diminished by RTP4.

It is found in the cell membrane. Its subcellular location is the cell projection. It localises to the axon. The protein resides in the perikaryon. The protein localises to the dendrite. It is found in the endosome. Its function is as follows. Receptor for endogenous opioids such as beta-endorphin and endomorphin. Receptor for natural and synthetic opioids including morphine, heroin, DAMGO, fentanyl, etorphine, buprenorphin and methadone. Also activated by enkephalin peptides, such as Met-enkephalin or Met-enkephalin-Arg-Phe, with higher affinity for Met-enkephalin-Arg-Phe. Agonist binding to the receptor induces coupling to an inactive GDP-bound heterotrimeric G-protein complex and subsequent exchange of GDP for GTP in the G-protein alpha subunit leading to dissociation of the G-protein complex with the free GTP-bound G-protein alpha and the G-protein beta-gamma dimer activating downstream cellular effectors. The agonist- and cell type-specific activity is predominantly coupled to pertussis toxin-sensitive G(i) and G(o) G alpha proteins, GNAI1, GNAI2, GNAI3 and GNAO1 isoforms Alpha-1 and Alpha-2, and to a lesser extent to pertussis toxin-insensitive G alpha proteins GNAZ and GNA15. They mediate an array of downstream cellular responses, including inhibition of adenylate cyclase activity and both N-type and L-type calcium channels, activation of inward rectifying potassium channels, mitogen-activated protein kinase (MAPK), phospholipase C (PLC), phosphoinositide/protein kinase (PKC), phosphoinositide 3-kinase (PI3K) and regulation of NF-kappa-B. Also couples to adenylate cyclase stimulatory G alpha proteins. The selective temporal coupling to G-proteins and subsequent signaling can be regulated by RGSZ proteins, such as RGS9, RGS17 and RGS4. Phosphorylation by members of the GPRK subfamily of Ser/Thr protein kinases and association with beta-arrestins is involved in short-term receptor desensitization. Beta-arrestins associate with the GPRK-phosphorylated receptor and uncouple it from the G-protein thus terminating signal transduction. The phosphorylated receptor is internalized through endocytosis via clathrin-coated pits which involves beta-arrestins. The activation of the ERK pathway occurs either in a G-protein-dependent or a beta-arrestin-dependent manner and is regulated by agonist-specific receptor phosphorylation. Acts as a class A G-protein coupled receptor (GPCR) which dissociates from beta-arrestin at or near the plasma membrane and undergoes rapid recycling. Receptor down-regulation pathways are varying with the agonist and occur dependent or independent of G-protein coupling. Endogenous ligands induce rapid desensitization, endocytosis and recycling. Heterooligomerization with other GPCRs can modulate agonist binding, signaling and trafficking properties. Functionally, isoform 9 is involved in morphine-induced scratching and seems to cross-activate GRPR in response to morphine. The sequence is that of Mu-type opioid receptor (Oprm1) from Mus musculus (Mouse).